The following is a 315-amino-acid chain: Ribosomal RNA small subunit methyltransferase H (315 aa).

Residues 33-35 (GGH), aspartate 52, phenylalanine 84, aspartate 106, and glutamine 113 each bind S-adenosyl-L-methionine. The interval 295–315 (SDELEENNRSHSAKLRVAEKL) is disordered.

Belongs to the methyltransferase superfamily. RsmH family.

It localises to the cytoplasm. The enzyme catalyses cytidine(1402) in 16S rRNA + S-adenosyl-L-methionine = N(4)-methylcytidine(1402) in 16S rRNA + S-adenosyl-L-homocysteine + H(+). Functionally, specifically methylates the N4 position of cytidine in position 1402 (C1402) of 16S rRNA. This is Ribosomal RNA small subunit methyltransferase H from Lactobacillus gasseri (strain ATCC 33323 / DSM 20243 / BCRC 14619 / CIP 102991 / JCM 1131 / KCTC 3163 / NCIMB 11718 / NCTC 13722 / AM63).